Consider the following 318-residue polypeptide: Ribosomal protein L11 methyltransferase (318 aa).

S-adenosyl-L-methionine is bound by residues threonine 159, glycine 180, aspartate 202, and asparagine 253.

The protein belongs to the methyltransferase superfamily. PrmA family.

It localises to the cytoplasm. The enzyme catalyses L-lysyl-[protein] + 3 S-adenosyl-L-methionine = N(6),N(6),N(6)-trimethyl-L-lysyl-[protein] + 3 S-adenosyl-L-homocysteine + 3 H(+). Its function is as follows. Methylates ribosomal protein L11. The sequence is that of Ribosomal protein L11 methyltransferase from Lachnospira eligens (strain ATCC 27750 / DSM 3376 / VPI C15-48 / C15-B4) (Eubacterium eligens).